The following is a 129-amino-acid chain: Small ribosomal subunit protein uS11 (129 aa).

This sequence belongs to the universal ribosomal protein uS11 family. As to quaternary structure, part of the 30S ribosomal subunit. Interacts with proteins S7 and S18. Binds to IF-3.

Its function is as follows. Located on the platform of the 30S subunit, it bridges several disparate RNA helices of the 16S rRNA. Forms part of the Shine-Dalgarno cleft in the 70S ribosome. The polypeptide is Small ribosomal subunit protein uS11 (Erythrobacter litoralis (strain HTCC2594)).